The primary structure comprises 96 residues: Integration host factor subunit beta (96 aa).

Residues 59–78 are disordered; that stretch reads RVGRNPKTGETVSLPGKYVP.

Belongs to the bacterial histone-like protein family. In terms of assembly, heterodimer of an alpha and a beta chain.

Its function is as follows. This protein is one of the two subunits of integration host factor, a specific DNA-binding protein that functions in genetic recombination as well as in transcriptional and translational control. This Thioalkalivibrio sulfidiphilus (strain HL-EbGR7) protein is Integration host factor subunit beta.